Consider the following 254-residue polypeptide: Inner membrane protein YabI (254 aa).

Topologically, residues 1–7 (MQALLEH) are periplasmic. 2 helical membrane-spanning segments follow: residues 8–28 (FITQ…FLES) and 29–49 (LALV…GALI). Topologically, residues 50–58 (GSGELSFWH) are periplasmic. The chain crosses the membrane as a helical span at residues 59-79 (AWLAGIIGCLMGDWISFWLGW). Residues 80–144 (RFKKPLHRWS…LPVAKFITPN (65 aa)) lie on the Cytoplasmic side of the membrane. Residues 145–165 (IIGCLLWPPFYFLPGILAGAA) form a helical membrane-spanning segment. The Periplasmic segment spans residues 166-178 (IDIPAGMQSGEFK). A helical transmembrane segment spans residues 179–199 (WLLLATAVFLWVGGWLCWRLW). Residues 200-215 (RSGKATDRLSHYLSRG) lie on the Cytoplasmic side of the membrane. The helical transmembrane segment at 216–236 (RLLWLTPLISAIGVVALVVLI) threads the bilayer. The Periplasmic portion of the chain corresponds to 237 to 254 (RHPLMPVYIDILRKVVGV).

Belongs to the DedA family.

The protein resides in the cell inner membrane. The polypeptide is Inner membrane protein YabI (yabI) (Escherichia coli (strain K12)).